The primary structure comprises 269 residues: MSRIAKRFAKLKAENRAALVTFITAGDPDHATSQALLDGMPAAGADIIELGMPFTDPMADGPAIQLAAGRALAAGGSLRQTLEMVEAFRKTDAETPIILMGYYNPVYAWGAEKFAADAAKAGVDGLIIVDLPPEEADELVPFLRQAGIDFIVLTTPTSDDARLPVVLANASGFVYYVSIAGITGTASAAQSAIDEAVARIRRHTGLPVCVGFGIKDPAQAAEVARVADGAVVGSAIVSVLADNIGKPGAVSAPLALVKDLAAGVRGARN.

Catalysis depends on proton acceptor residues glutamate 49 and aspartate 60.

Belongs to the TrpA family. As to quaternary structure, tetramer of two alpha and two beta chains.

It catalyses the reaction (1S,2R)-1-C-(indol-3-yl)glycerol 3-phosphate + L-serine = D-glyceraldehyde 3-phosphate + L-tryptophan + H2O. It functions in the pathway amino-acid biosynthesis; L-tryptophan biosynthesis; L-tryptophan from chorismate: step 5/5. Functionally, the alpha subunit is responsible for the aldol cleavage of indoleglycerol phosphate to indole and glyceraldehyde 3-phosphate. The sequence is that of Tryptophan synthase alpha chain from Paramagnetospirillum magneticum (strain ATCC 700264 / AMB-1) (Magnetospirillum magneticum).